Consider the following 243-residue polypeptide: MELYIITGASKGLGQAIALQALEKGHEVHALSRTKTDVSHKKLTQHQIDLINLEEAEQQFETLLSSIDSDRYSGITLINNAGMVTPIKRAGEASLDELQRHYQLNLTAPVLLSQLFTKRFASYSGKKTVVNITSGAAKNPYKGWSAYCSSKAGLDMFTRTFGFEQEDEELPVNMISFSPGVMDTEMQAVIRSSSKKDFHHIERFRKLNETGSLRSPDFIAGTLLSLLEKGTENGRIYDIKEFL.

NADP(+) is bound by residues Ile-6, Asn-80, Tyr-147, Lys-151, and Thr-184. Tyr-147 (proton acceptor) is an active-site residue.

Belongs to the short-chain dehydrogenases/reductases (SDR) family.

Its subcellular location is the cytoplasm. It catalyses the reaction (S)-benzoin + NADP(+) = benzil + NADPH + H(+). Reduces benzil stereospecifically to (S)-benzoin. The chain is Benzil reductase ((S)-benzoin forming) (yueD) from Bacillus subtilis (strain 168).